A 99-amino-acid chain; its full sequence is Aspartyl/glutamyl-tRNA(Asn/Gln) amidotransferase subunit C (99 aa).

The protein belongs to the GatC family. As to quaternary structure, heterotrimer of A, B and C subunits.

It catalyses the reaction L-glutamyl-tRNA(Gln) + L-glutamine + ATP + H2O = L-glutaminyl-tRNA(Gln) + L-glutamate + ADP + phosphate + H(+). The enzyme catalyses L-aspartyl-tRNA(Asn) + L-glutamine + ATP + H2O = L-asparaginyl-tRNA(Asn) + L-glutamate + ADP + phosphate + 2 H(+). In terms of biological role, allows the formation of correctly charged Asn-tRNA(Asn) or Gln-tRNA(Gln) through the transamidation of misacylated Asp-tRNA(Asn) or Glu-tRNA(Gln) in organisms which lack either or both of asparaginyl-tRNA or glutaminyl-tRNA synthetases. The reaction takes place in the presence of glutamine and ATP through an activated phospho-Asp-tRNA(Asn) or phospho-Glu-tRNA(Gln). The chain is Aspartyl/glutamyl-tRNA(Asn/Gln) amidotransferase subunit C from Burkholderia mallei (strain NCTC 10247).